The sequence spans 158 residues: Small ribosomal subunit protein uS7 (158 aa).

Belongs to the universal ribosomal protein uS7 family. As to quaternary structure, part of the 30S ribosomal subunit. Contacts proteins S9 and S11.

Functionally, one of the primary rRNA binding proteins, it binds directly to 16S rRNA where it nucleates assembly of the head domain of the 30S subunit. Is located at the subunit interface close to the decoding center, probably blocks exit of the E-site tRNA. The chain is Small ribosomal subunit protein uS7 from Wolbachia pipientis subsp. Culex pipiens (strain wPip).